Reading from the N-terminus, the 634-residue chain is Coilin (634 aa).

3 disordered regions span residues 87-135 (VSPA…IAEN), 149-276 (PGPS…KLSQ), and 342-361 (GAKS…DSTL). Residues 152-181 (SVQSKLLTNKGTPKAPETQTEVSNMSANIE) are compositionally biased toward polar residues. Basic and acidic residues-rich tracts occupy residues 223-234 (TLKEGKMSESKN) and 251-272 (KENE…KIPD).

The protein belongs to the coilin family. In terms of tissue distribution, in egg chambers expressed in the follicle cells, nurse cells and oocyte. Expressed in the larval brain, salivary glands, fat bodies and in the somatic hub cells at the tip of the testis. Expressed in the spermatogonia and spermatocytes, and in the adult ejaculatory duct (at protein level). Expressed in the adult Malpighian tubules.

It is found in the nucleus. Its subcellular location is the nucleoplasm. The protein resides in the cajal body. It localises to the chromosome. The protein localises to the centromere. It is found in the cytoplasm. Its subcellular location is the cytoskeleton. The protein resides in the spindle. Its function is as follows. Component of nuclear coiled bodies, also known as Cajal bodies or CBs, which are involved in the modification and assembly of nucleoplasmic snRNPs. Required for Cajal body formation. This chain is Coilin, found in Drosophila melanogaster (Fruit fly).